The primary structure comprises 526 residues: Cytochrome P450 monooxygenase SAT11 (526 aa).

A helical transmembrane segment spans residues 18–38 (AFLLIAMLYLGYLLCICFYNI). N-linked (GlcNAc...) asparagine glycans are attached at residues N125 and N447. A heme-binding site is contributed by C455. N520 carries an N-linked (GlcNAc...) asparagine glycan.

Belongs to the cytochrome P450 family. The cofactor is heme.

It is found in the membrane. It participates in mycotoxin biosynthesis. Functionally, cytochrome P450 monooxygenase; part of the satratoxin SC2 cluster involved in the biosynthesis of satratoxins, trichothecene mycotoxins that are associated with human food poisonings. Satratoxins are suggested to be made by products of multiple gene clusters (SC1, SC2 and SC3) that encode 21 proteins in all, including polyketide synthases, acetyltransferases, and other enzymes expected to modify the trichothecene skeleton. SC1 encodes 10 proteins, SAT1 to SAT10. The largest are SAT8, which encodes a putative polyketide synthase (PKS) with a conventional non-reducing architecture, and SAT10, a putative protein containing four ankyrin repeats and thus may be involved in protein scaffolding. The putative short-chain reductase SAT3 may assist the PKS in some capacity. SAT6 contains a secretory lipase domain and acts probably as a trichothecene esterase. SAT5 encodes a putative acetyltransferase, and so, with SAT6, may affect endogenous protection from toxicity. The probable transcription factor SAT9 may regulate the expression of the SC1 cluster. SC2 encodes proteins SAT11 to SAT16, the largest of which encodes the putative reducing PKS SAT13. SAT11 is a cytochrome P450 monooxygenase, while SAT14 and SAT16 are probable acetyltransferases. The SC2 cluster may be regulated by the transcription factor SAT15. SC3 is a small cluster that encodes 5 proteins, SAT17 to SAT21. SAT21 is a putative MFS-type transporter which may have a role in exporting secondary metabolites. The four other proteins putatively encoded in SC3 include the taurine hydroxylase-like protein SAT17, the O-methyltransferase SAT18, the acetyltransferase SAT19, and the Cys6-type zinc finger SAT20, the latter being probably involved in regulation of SC3 expression. The chain is Cytochrome P450 monooxygenase SAT11 from Stachybotrys chartarum (strain CBS 109288 / IBT 7711) (Toxic black mold).